The primary structure comprises 313 residues: Probable cell division protein WhiA (313 aa).

Residues 277–311 (SLKEVAAQVPDGPISKSGVNHRFQKIREMAQQLKE) constitute a DNA-binding region (H-T-H motif).

The protein belongs to the WhiA family.

Involved in cell division and chromosome segregation. This is Probable cell division protein WhiA from Lactobacillus gasseri (strain ATCC 33323 / DSM 20243 / BCRC 14619 / CIP 102991 / JCM 1131 / KCTC 3163 / NCIMB 11718 / NCTC 13722 / AM63).